Reading from the N-terminus, the 510-residue chain is NAD(P)H-quinone oxidoreductase subunit 2 B, chloroplastic (510 aa).

Transmembrane regions (helical) follow at residues 24-44 (LLLF…GLIL), 57-77 (IPWL…ALLF), 99-119 (IFQF…VEYI), 124-144 (MAIT…MFLC), 150-170 (ITIF…SGYT), 183-203 (YLLM…WLYG), 229-249 (ISIA…PAPF), 295-315 (WHLL…LIAI), 323-343 (MLAY…IVGD), 354-374 (YMLF…LFGL), 395-415 (ALSS…AGFF), 418-438 (LHLF…IGLL), and 484-504 (MIVC…IIAI).

It belongs to the complex I subunit 2 family. In terms of assembly, NDH is composed of at least 16 different subunits, 5 of which are encoded in the nucleus.

It is found in the plastid. It localises to the chloroplast thylakoid membrane. It carries out the reaction a plastoquinone + NADH + (n+1) H(+)(in) = a plastoquinol + NAD(+) + n H(+)(out). The enzyme catalyses a plastoquinone + NADPH + (n+1) H(+)(in) = a plastoquinol + NADP(+) + n H(+)(out). NDH shuttles electrons from NAD(P)H:plastoquinone, via FMN and iron-sulfur (Fe-S) centers, to quinones in the photosynthetic chain and possibly in a chloroplast respiratory chain. The immediate electron acceptor for the enzyme in this species is believed to be plastoquinone. Couples the redox reaction to proton translocation, and thus conserves the redox energy in a proton gradient. This Drimys granadensis protein is NAD(P)H-quinone oxidoreductase subunit 2 B, chloroplastic.